A 936-amino-acid chain; its full sequence is Aconitate hydratase A (936 aa).

The disordered stretch occupies residues V401–T449. The segment covering T412–T422 has biased composition (polar residues). [4Fe-4S] cluster-binding residues include C472, C538, and C541.

Belongs to the aconitase/IPM isomerase family. As to quaternary structure, monomer. It depends on [4Fe-4S] cluster as a cofactor.

It catalyses the reaction citrate = D-threo-isocitrate. The enzyme catalyses (2S,3R)-3-hydroxybutane-1,2,3-tricarboxylate = 2-methyl-cis-aconitate + H2O. Its pathway is carbohydrate metabolism; tricarboxylic acid cycle; isocitrate from oxaloacetate: step 2/2. It functions in the pathway organic acid metabolism; propanoate degradation. Its function is as follows. Involved in the catabolism of short chain fatty acids (SCFA) via the tricarboxylic acid (TCA)(acetyl degradation route) and probably via the 2-methylcitrate cycle I (propionate degradation route). Catalyzes the reversible isomerization of citrate to isocitrate via cis-aconitate. Could catalyze the hydration of 2-methyl-cis-aconitate to yield (2R,3S)-2-methylisocitrate. The apo form of AcnA functions as a RNA-binding regulatory protein. The protein is Aconitate hydratase A (acn) of Corynebacterium jeikeium (strain K411).